Reading from the N-terminus, the 585-residue chain is ATP-dependent RNA helicase DBP3 (585 aa).

Residues 1–124 (MTTSATEKAL…SSSASAASFT (124 aa)) are disordered. The span at 26–43 (AKAAAAAGASASTSLEGS) shows a compositional bias: low complexity. 2 stretches are compositionally biased toward basic residues: residues 52–64 (KDKK…KDKK) and 79–93 (AKKR…KKAA). A compositionally biased stretch (low complexity) spans 94 to 124 (AKSGAATSLESTPAASPAPAASSSASAASFT). The short motif at 159-187 (FRELDGKVDAAVKKTLDSQGFSTPTPIQA) is the Q motif element. The Helicase ATP-binding domain occupies 190 to 377 (WPVLLQNKDV…ESFMNGPVRV (188 aa)). 203 to 210 (AETGSGKT) provides a ligand contact to ATP. The short motif at 322–325 (DEAD) is the DEAD box element. The Helicase C-terminal domain occupies 406–554 (RLNDFLRSVN…KVPDALTKFP (149 aa)).

This sequence belongs to the DEAD box helicase family. DDX5/DBP2 subfamily.

It is found in the nucleus. The protein localises to the nucleolus. It carries out the reaction ATP + H2O = ADP + phosphate + H(+). In terms of biological role, ATP-dependent RNA helicase required for 60S ribosomal subunit synthesis. Involved in efficient pre-rRNA processing, predominantly at site A3, which is necessary for the normal formation of 25S and 5.8S rRNAs. The chain is ATP-dependent RNA helicase DBP3 (DBP3) from Mycosarcoma maydis (Corn smut fungus).